Consider the following 328-residue polypeptide: 4-hydroxy-3-methylbut-2-enyl diphosphate reductase (328 aa).

[4Fe-4S] cluster is bound at residue Cys24. Residues His55 and His88 each coordinate (2E)-4-hydroxy-3-methylbut-2-enyl diphosphate. Residues His55 and His88 each contribute to the dimethylallyl diphosphate site. Positions 55 and 88 each coordinate isopentenyl diphosphate. A [4Fe-4S] cluster-binding site is contributed by Cys110. A (2E)-4-hydroxy-3-methylbut-2-enyl diphosphate-binding site is contributed by His138. His138 provides a ligand contact to dimethylallyl diphosphate. His138 is an isopentenyl diphosphate binding site. Glu140 functions as the Proton donor in the catalytic mechanism. Thr178 is a (2E)-4-hydroxy-3-methylbut-2-enyl diphosphate binding site. A [4Fe-4S] cluster-binding site is contributed by Cys208. Residues Ser236, Ser237, Asn238, and Ser279 each contribute to the (2E)-4-hydroxy-3-methylbut-2-enyl diphosphate site. Dimethylallyl diphosphate is bound by residues Ser236, Ser237, Asn238, and Ser279. Isopentenyl diphosphate is bound by residues Ser236, Ser237, Asn238, and Ser279.

It belongs to the IspH family. [4Fe-4S] cluster is required as a cofactor.

The catalysed reaction is isopentenyl diphosphate + 2 oxidized [2Fe-2S]-[ferredoxin] + H2O = (2E)-4-hydroxy-3-methylbut-2-enyl diphosphate + 2 reduced [2Fe-2S]-[ferredoxin] + 2 H(+). It carries out the reaction dimethylallyl diphosphate + 2 oxidized [2Fe-2S]-[ferredoxin] + H2O = (2E)-4-hydroxy-3-methylbut-2-enyl diphosphate + 2 reduced [2Fe-2S]-[ferredoxin] + 2 H(+). Its pathway is isoprenoid biosynthesis; dimethylallyl diphosphate biosynthesis; dimethylallyl diphosphate from (2E)-4-hydroxy-3-methylbutenyl diphosphate: step 1/1. The protein operates within isoprenoid biosynthesis; isopentenyl diphosphate biosynthesis via DXP pathway; isopentenyl diphosphate from 1-deoxy-D-xylulose 5-phosphate: step 6/6. Its function is as follows. Catalyzes the conversion of 1-hydroxy-2-methyl-2-(E)-butenyl 4-diphosphate (HMBPP) into a mixture of isopentenyl diphosphate (IPP) and dimethylallyl diphosphate (DMAPP). Acts in the terminal step of the DOXP/MEP pathway for isoprenoid precursor biosynthesis. This chain is 4-hydroxy-3-methylbut-2-enyl diphosphate reductase, found in Ehrlichia ruminantium (strain Gardel).